Consider the following 259-residue polypeptide: UPF0246 protein PFLU_0992 (259 aa).

The protein belongs to the UPF0246 family.

The protein is UPF0246 protein PFLU_0992 of Pseudomonas fluorescens (strain SBW25).